Reading from the N-terminus, the 666-residue chain is Probable potassium transport system protein Kup (666 aa).

A run of 12 helical transmembrane segments spans residues 16–36, 58–78, 99–119, 141–161, 167–187, 221–241, 253–273, 292–312, 343–363, 373–393, 402–422, and 424–444; these read GFII…LYTM, ISLI…LVAL, TPWL…DGAL, IFQN…LLFA, TGVI…FLGI, IFIL…YSDL, WPFV…WILA, FTMH…QALI, TYIP…VLLF, YGLA…FFLI, VLLM…ASAV, and FMHG…IMII.

This sequence belongs to the HAK/KUP transporter (TC 2.A.72) family.

It localises to the cell membrane. It catalyses the reaction K(+)(in) + H(+)(in) = K(+)(out) + H(+)(out). Functionally, transport of potassium into the cell. Likely operates as a K(+):H(+) symporter. The protein is Probable potassium transport system protein Kup of Streptococcus agalactiae serotype III (strain NEM316).